Consider the following 2947-residue polypeptide: MASVGCSLRSASTSATNGPSLAGLCAKVDLYLGCSRCTQCLNESTYILREVEHTCPREILLARFKQAAESKIWRKVGRRPSFPTPMRYQVCHYYRPGLGCRRHWNRCTFARSPEEALVWTFELKNNLPRLKLKEAVQGTRAPDRLQTPADTIRAEFGGHFQLLCAICFTCCPPCLCPVDPRGHCPKHQICPTLLIHVIVEGLKRQFVEVRPLPQRRHPLNYCMYVGRGVPCRHGASRCEYAHSAVEMAVWKAEQLDGLQRGDLLTYPLFGENKWKASPNPNPPVTKLYCHACLVTCNSQEAFENHCSSLEHAQMVAFDQAVPWKHRAPPMGLSKFDLCPRPDLCEHGEVCIKAHSKQELQEWVQRAQDMELREQAAWQDGLVPYQARLLAEYQRSSKEVSVMAETIRGVSVTCHPPPVHQAQEKIQHQWVFTIHSEDPLLHVALLNQEPGAAFSLVAPSLPPHQLYAQGKHFCVQSSPAQYKVGVLVQAVAFGSFEQWVVFDFGRRPVLLQKLKLQLGQTHSQGLNGKPAPSHPQELECWHTGNRHVVLEVDWTPEQEALMAKYKLPSLALEFNQIVPDWGPISRSNYRQRMHKFLYEEEAAQQQLVAKLAMKGQVSLKTALETPALGMLFAPPGALYAKVPFHSSLLPDTDQGFLLSRAVSTALVAPVPAPNSTVYQVRLEARASSDHALWLLLPARCCMALGLQAQDSPILEVQFQIDPMTFRFWHQAVDALLEEHLVVPDLPACTLPHPWPTPPSFRGNHKQKLAVGLIAGRRPEGTKHIPPLLIYGPFGTGKTYTLAMAALEVVQQPHTKVLICTHTNSAADIYIREYFHDYVSSGHPEATPLRVMYADRPPRQTDPTTLQYCCLTEDRQAFRPPTGPELVHHRLVVTTTSQARELQVPAGFFSHIFIDEAAQMLECEALIPLSYALSLTRVVLAGDHMQVTPRLFSVPRDKSARHTLLHRLFLYYQQEAHKIAQQSRIIFHENYRSTAAIINFVSHHFYLAKGNPIQASGKVPRHPQHYPLMFCHVAGSPEQDMSMTSWLNSAEVTQVVEKVREIYNTWPHCWGPREQRHICAVSHGAQVSALRQELRRRNLGEVSVGSFEILPGREFRVVVLSSVHNRNSLLSPGAPTSEFFTEPRVLNTVMTRAQSQLVAVGDAVALCSSGACRNLWRSFIRECIEHHSAFPEELSLEQIEQGVAQRQNWASLTLKARGPETEQKSMAQGPQRLIAEGTMVTVKAETRAEAAAKAQTAAVAAEDTASGNSASRDAAAEVSTLEGGMSEEDSESDFWPSDWELNADDAILKELLDESQQVTVTVREDGLLDTVVCSAPQKAREYTNLPSSVLWKFLRSNSKQFRRCSFLQETFERALATPLDDMASSPIQVRGRLNCGMAFTGDEVLVQILGPAGDDRCVPGSLQGRVMGVLKRRRHELAFVCRMDEWDPRIMIPINGSVTKIFVAEMKDPQQVPIHRLIQGQVQRVRHETLKPEDRSTRLFWVRIVLWRERFYYPLGIVLEVLPKAITWEQGLYILDLEHGLKAHTPDPASVSKALQRYRSELNTAAGHREDYRHFLTFTVDPQGACNLDDALSVRDLGPVYEVAVHIADVASLVPKDGALDVEARQQGTVFYAPNREPVLMLPASLCQDALSLLPGQDRLAISLFLTMEKGGGQIKSLRFAPSIIRSDRQLSYEEAEELIKRHPGAGLELPAHLDSVEACVVAACYFSWMLRRQRLSAACYYEPPDEDSVLGFRTAHIMVQEYMIQFNSHVAEFLVSNKHTQTLTPLRWQPTPSRQQLDSVFKKYRGLVPLSLHLCHHSNTDYTPNKQLHLLTSLWKQVQLAAGTQDYSQMVDLIAADDMHPSLAPACLDLRRALGRSVFGRSSQGKQQPAVHHSLQVDWYTWATSPIRRYLDVVLQRLILLALGHRGSTYSNRDIDGLCLDFSRQYASAQSYQRRAYSLHLAIQLKSQPQNKLGFVVDVEMGARCFKVLFPINRETLPDPCPIHYHSLQLAEHPQELVSQTGVRLVWRRRMYSVQASKLPLPLLGTSLDPHTQTVDAALWMKLLMLLKEQRWPEIAALIQEQDKRFHPREKVKIHQSRCGHFVEVVYELGSGDTLQVQLGSSLQRGFLAPTLKLWTVVPGFSLCLEHMERPGDCFSSHVHQALQDQYLQVGEYSGAWGPRCALESLTNAVTENDSIVLHDVHISWDTSQGQLQGTFQLEAAFLQEKCINIHFGCCYLCIRLEGLPLPLDSSLPGPSGLGPFLNIDPNTYTWVAHGLSGDWDHELAGGDWDQENVDDRQEAPKQVYFLIHHMTMEKVPEEVLRPSARFTVEVLSKQLPDLRKEEAVRQLKTASPLVISIALGLPIPEIRWPISGPRRLVSELRWPIPGPRRPVSEPHRPMSGPCGPISEPCRSIPEPCRGNWPRQHSFHKASTSRFLERQNYNIPAGHHKLNQSQDRAVRSALQKQFTVIQGPPGTGKTVVGFHIVYWFHRSNQEQMPTDSSPSGEEQLGGPCVLYCGPSNKSVDVLGGLLLRRKTEMKPLRVYGEQAEATEFPLPGVSNRSLFGKTSQEGRPNQSLRSITLHHRIRQAPNPYAAEIRKFDAQLREGKIFSKEDLRVYRRVLGKARKHELERHSVILCTCSCAASKSLKILNVRQILIDEAGMATEPETLIPLVCFSKTVEKVVLLGDHKQLRPVVKSEQLQSLGMDRSLFERYHRDAIMLDTQYRMHKDICSFPSVEFYGGKLKTWSDLRRLPSILGHTGKPSCSVIFGSVQGHEQKLLVSTEDGNENSRANPEEVTQVVRIIKQLTLDRTVDPKDIAVLTPYNAQAAAISRGLMQRGVTGVTVTSITKSQGSEWRYVIVSTVRTCPRSDVDQRPTKSWLKKFLGFVVDPHQVNVAITRAQEALCIIGDHLLLRCCPLWHRLLDFCEAQHSLVSAEKVRVQRKSALSS.

The C3H1-type 1 zinc finger occupies 85 to 114 (PMRYQVCHYYRPGLGCRRHWNRCTFARSPE). A C2H2-type zinc finger spans residues 167–187 (CFTCCPPCLCPVDPRGHCPKH). The C3H1-type 2 zinc-finger motif lies at 221–245 (YCMYVGRGVPCRHGASRCEYAHSAV). The C2H2-type; atypical zinc-finger motif lies at 289–311 (CHACLVTCNSQEAFENHCSSLEH). One can recognise a UvrD-like helicase ATP-binding domain in the interval 769–1317 (VGLIAGRRPE…ELLDESQQVT (549 aa)). ATP is bound at residue 790–797 (GPFGTGKT). Positions 809 to 1290 (QQPHTKVLIC…GGMSEEDSES (482 aa)) are interaction with THRAP3. A DEAA box motif is present at residues 913–916 (DEAA). A disordered region spans residues 1260–1292 (EDTASGNSASRDAAAEVSTLEGGMSEEDSESDF). Short sequence motifs (LXXLL motif) lie at residues 1306–1310 (LKELL), 1348–1352 (LWKFL), 1403–1407 (LVQIL), and 2240–2244 (LEGLP). Omega-N-methylarginine is present on Arg-2381. The tract at residues 2413–2947 (PEPCRGNWPR…RVQRKSALSS (535 aa)) is interaction with THRAP3. One can recognise a UvrD-like helicase ATP-binding 2 domain in the interval 2449-2726 (LNQSQDRAVR…IMLDTQYRMH (278 aa)). 2470 to 2477 (GPPGTGKT) contacts ATP. An LXXLL motif 5 motif is present at residues 2525–2529 (LGGLL).

Belongs to the DNA2/NAM7 helicase family. As to quaternary structure, interacts with PPARA (via DNA-binding domain) and PPARG; the interaction stimulates the transcriptional activity of PPARA and PPARG. Interacts with THRAP3; the interaction is direct and HELZ2 and THRAP3 synergistically enhance the transcriptional activity of PPARG. It is probably part of the peroxisome proliferator activated receptor alpha interacting complex (PRIC).

Its subcellular location is the cytoplasm. It carries out the reaction Exonucleolytic cleavage in the 3'- to 5'-direction to yield nucleoside 5'-phosphates.. The catalysed reaction is ATP + H2O = ADP + phosphate + H(+). Can degrade highly structured RNAs through its concerted ATP-dependent RNA helicase and 3' to 5' exoribonuclease activities. Shows a strong preference for pyrimidine over purine residues for its nuclease activity. Acts as a transcriptional coactivator for a number of nuclear receptors including PPARA, PPARG, THRA, THRB and RXRA. This chain is 3'-5' exoribonuclease HELZ2 (Helz2), found in Mus musculus (Mouse).